Consider the following 969-residue polypeptide: Integrator complex subunit 4 (969 aa).

HEAT repeat units follow at residues Ala-68 to Phe-107, Val-147 to Ser-185, Asn-192 to Lys-230, Leu-231 to Tyr-265, Ile-279 to Ser-315, Asn-371 to Ser-407, Ala-408 to Leu-446, and Glu-448 to Leu-486. Positions Arg-928–Glu-949 are enriched in low complexity. Residues Arg-928–Gly-950 are disordered.

Belongs to the Integrator subunit 4 family. In terms of assembly, component of the Integrator complex, composed of core subunits INTS1, INTS2, INTS3, INTS4, INTS5, INTS6, INTS7, INTS8, INTS9/RC74, INTS10, INTS11/CPSF3L, INTS12, INTS13, INTS14 and INTS15. The core complex associates with protein phosphatase 2A subunits PPP2CA and PPP2R1A, to form the Integrator-PP2A (INTAC) complex. INTS4 is part of the RNA endonuclease subcomplex, composed of INTS4, INTS9, INTS11 and inositol hexakisphosphate (InsP6).

It localises to the nucleus. The protein localises to the cytoplasm. Its function is as follows. Component of the integrator complex, a multiprotein complex that terminates RNA polymerase II (Pol II) transcription in the promoter-proximal region of genes. The integrator complex provides a quality checkpoint during transcription elongation by driving premature transcription termination of transcripts that are unfavorably configured for transcriptional elongation: the complex terminates transcription by (1) catalyzing dephosphorylation of the C-terminal domain (CTD) of Pol II subunit POLR2A/RPB1 and SUPT5H/SPT5, (2) degrading the exiting nascent RNA transcript via endonuclease activity and (3) promoting the release of Pol II from bound DNA. The integrator complex is also involved in terminating the synthesis of non-coding Pol II transcripts, such as enhancer RNAs (eRNAs), small nuclear RNAs (snRNAs), telomerase RNAs and long non-coding RNAs (lncRNAs). This is Integrator complex subunit 4 (ints4) from Xenopus laevis (African clawed frog).